The primary structure comprises 884 residues: Translation initiation factor IF-2 (884 aa).

Residues 58-248 (PEKVEQKRVR…GKTESVETEE (191 aa)) are disordered. Residues 66-77 (VRSNVIRKRRQP) show a composition bias toward basic residues. Over residues 87-106 (EAPAAQAPEAEEVTAPTAEE) the composition is skewed to low complexity. A compositionally biased stretch (basic residues) spans 172–183 (SRKKAKAKKHQA). Low complexity predominate over residues 207–223 (DTAPADSPAAPAAATPA). Positions 229 to 239 (KPSRKDRKKRG) are enriched in basic residues. The 170-residue stretch at 384 to 553 (KRAPVVTIMG…LLQAEMLELK (170 aa)) folds into the tr-type G domain. Positions 393 to 400 (GHVDHGKT) are G1. GTP is bound at residue 393–400 (GHVDHGKT). The interval 418–422 (GITQH) is G2. Positions 439–442 (DTPG) are G3. GTP contacts are provided by residues 439 to 443 (DTPGH) and 493 to 496 (NKID). Residues 493–496 (NKID) are G4. Positions 529–531 (SAK) are G5.

This sequence belongs to the TRAFAC class translation factor GTPase superfamily. Classic translation factor GTPase family. IF-2 subfamily.

Its subcellular location is the cytoplasm. In terms of biological role, one of the essential components for the initiation of protein synthesis. Protects formylmethionyl-tRNA from spontaneous hydrolysis and promotes its binding to the 30S ribosomal subunits. Also involved in the hydrolysis of GTP during the formation of the 70S ribosomal complex. The chain is Translation initiation factor IF-2 from Desulfosudis oleivorans (strain DSM 6200 / JCM 39069 / Hxd3) (Desulfococcus oleovorans).